The chain runs to 214 residues: Small ribosomal subunit protein uS3 (214 aa).

One can recognise a KH type-2 domain in the interval 39–107 (IRAYLLKKPA…EVWVAVEEVK (69 aa)).

This sequence belongs to the universal ribosomal protein uS3 family. In terms of assembly, part of the 30S ribosomal subunit. Forms a tight complex with proteins S10 and S14.

In terms of biological role, binds the lower part of the 30S subunit head. Binds mRNA in the 70S ribosome, positioning it for translation. This is Small ribosomal subunit protein uS3 from Protochlamydia amoebophila (strain UWE25).